Here is a 691-residue protein sequence, read N- to C-terminus: Germ cell nuclear acidic protein (691 aa).

The short motif at 22–25 is the SUMO interaction motif 1 (SIM) element; the sequence is ILNV. The tract at residues 25-488 is disordered; that stretch reads VQSSSDDTSG…GAAKVEKRKT (464 aa). Positions 27–36 are enriched in low complexity; the sequence is SSSDDTSGSS. Over residues 48 to 63 the composition is skewed to polar residues; it reads CILNVQSRSGDTSGSS. 3 short sequence motifs (SUMO interaction motif 1 (SIM)) span residues 76–79, 97–100, and 121–124; these read VVVI, LLEI, and IVIS. The span at 86–97 shows a compositional bias: basic and acidic residues; sequence ECHTHEEKKAKL. The segment covering 124-333 has biased composition (acidic residues); sequence SDDDNDDDNG…VPDDNSDDLE (210 aa). Residues 467-488 show a composition bias toward basic residues; it reads GHKKRGPSKKKPGAAKVEKRKT. Positions 522–677 constitute a SprT-like domain; it reads VQRIYDLFNR…AKCKGSLVMV (156 aa).

This sequence belongs to the serine-aspartate repeat-containing protein (SDr) family. As to quaternary structure, interacts (via SIM domains) with SUMO2; this interaction allows the GCNA recruitment to DPCs sites. Interacts with TOP2A; this interaction allows the resolution of topoisomerase II (TOP2A) DNA-protein cross-links. In terms of tissue distribution, expressed in germ cells of the testis (at protein level). Detected in skeletal muscle, liver, kidney, pancreas, heart, lung and brain. Expressed throughout spermatogenesis, from spermatogonia to elongated spermatids, in normal adult testis (at protein level).

It is found in the nucleus. Its subcellular location is the PML body. The protein localises to the chromosome. In terms of biological role, may play a role in DNA-protein cross-links (DPCs) clearance through a SUMO-dependent recruitment to sites of DPCs, ensuring the genomic stability by protecting germ cells and early embryos from various sources of damage. Can resolve the topoisomerase II (TOP2A) DPCs. The polypeptide is Germ cell nuclear acidic protein (Homo sapiens (Human)).